We begin with the raw amino-acid sequence, 318 residues long: Porphobilinogen deaminase (318 aa).

Residue Cys-241 is modified to S-(dipyrrolylmethanemethyl)cysteine.

It belongs to the HMBS family. In terms of assembly, monomer. Dipyrromethane serves as cofactor.

It catalyses the reaction 4 porphobilinogen + H2O = hydroxymethylbilane + 4 NH4(+). It participates in porphyrin-containing compound metabolism; protoporphyrin-IX biosynthesis; coproporphyrinogen-III from 5-aminolevulinate: step 2/4. Its function is as follows. Tetrapolymerization of the monopyrrole PBG into the hydroxymethylbilane pre-uroporphyrinogen in several discrete steps. The chain is Porphobilinogen deaminase from Geotalea daltonii (strain DSM 22248 / JCM 15807 / FRC-32) (Geobacter daltonii).